A 156-amino-acid polypeptide reads, in one-letter code: Transcriptional repressor NrdR (156 aa).

A zinc finger lies at 3 to 34 (CPFCGSMDTRVLDSRPTLDGTAIRRRRECSSC). The 91-residue stretch at 49 to 139 (VLVVKKDGRR…VYRDFREVDQ (91 aa)) folds into the ATP-cone domain.

It belongs to the NrdR family. Zn(2+) is required as a cofactor.

Functionally, negatively regulates transcription of bacterial ribonucleotide reductase nrd genes and operons by binding to NrdR-boxes. In Thermotoga maritima (strain ATCC 43589 / DSM 3109 / JCM 10099 / NBRC 100826 / MSB8), this protein is Transcriptional repressor NrdR.